Reading from the N-terminus, the 219-residue chain is Large ribosomal subunit protein uL3 (219 aa).

Belongs to the universal ribosomal protein uL3 family. Part of the 50S ribosomal subunit. Forms a cluster with proteins L14 and L19.

Its function is as follows. One of the primary rRNA binding proteins, it binds directly near the 3'-end of the 23S rRNA, where it nucleates assembly of the 50S subunit. In Salinispora tropica (strain ATCC BAA-916 / DSM 44818 / JCM 13857 / NBRC 105044 / CNB-440), this protein is Large ribosomal subunit protein uL3.